The primary structure comprises 396 residues: Elongation factor Tu (396 aa).

One can recognise a tr-type G domain in the interval 10–205 (KPHVNIGTIG…ACDDNIPDPV (196 aa)). Residues 19–26 (GHVDHGKT) form a G1 region. 19–26 (GHVDHGKT) contacts GTP. Thr-26 is a Mg(2+) binding site. The G2 stretch occupies residues 62–66 (GITIN). Residues 83-86 (DAPG) form a G3 region. GTP-binding positions include 83-87 (DAPGH) and 138-141 (NKCD). The interval 138-141 (NKCD) is G4. Residues 175 to 177 (SAL) form a G5 region.

Belongs to the TRAFAC class translation factor GTPase superfamily. Classic translation factor GTPase family. EF-Tu/EF-1A subfamily. In terms of assembly, monomer.

The protein resides in the cytoplasm. The catalysed reaction is GTP + H2O = GDP + phosphate + H(+). GTP hydrolase that promotes the GTP-dependent binding of aminoacyl-tRNA to the A-site of ribosomes during protein biosynthesis. The polypeptide is Elongation factor Tu (Corynebacterium glutamicum (strain R)).